Reading from the N-terminus, the 421-residue chain is FAD-dependent monooxygenase atnJ (421 aa).

A helical membrane pass occupies residues 9-29 (LVPLHVVIVGAGIGGLSAAVA). Residues Glu41 and Ala54 each contribute to the FAD site. Arg188 is a catalytic residue. FAD contacts are provided by Asp303 and Val316. Residues 371 to 392 (RDGDAQAARDSQRKATSGTGQN) are disordered.

Belongs to the paxM FAD-dependent monooxygenase family. FAD is required as a cofactor.

It is found in the membrane. Its pathway is secondary metabolite biosynthesis; terpenoid biosynthesis. Functionally, FAD-dependent monooxygenase; part of the gene cluster that mediates the biosynthesis of the meroterpenoids arthripenoids. The pathway begins with the HR-PKS atnH that catalyzes two chain-extension steps to form a reduced triketide, which then primes the SAT domain in the NR-PKS atnG to initiate three more cycles of extension to give a linear hexaketide corresponding to the polyketide part of arthripenoids. The FAD-dependent monooxygenase atnJ then performs an oxidative decarboxylation at C11 of the atnH/atnG product, via an electrophilic aromatic hydroxylation with concomitant ipso-decarboxylation. The membrane-bound polyprenyl transferase atnF then introduces a farnesyl group before the FAD-dependent monooxygenase atnK functions as the first epoxidase on terminal C12'-C13' olefin, followed by a second epoxidation on C7'-C8' catalyzed by atnA. The terpene cyclase/mutase atnI then initiates the sequential tricyclic ring formation through protonation of the terminal epoxide and catalyzes the regioselective and stereoselective 6/6/6-tricyclic ring formation. The cytochrome P450 monooxygenase atnM is responsible for hydroxylating both C1' and C10'. The next steps may involve ketoreduction and acetyl transfer by the ketoreductase atnB and the acetyltransferase atnC, and lead to the production of arthripenoid B, the final biosynthetic product of the atn cluster. The hydroquinone moiety in arthripenoid B is prone to undergo spontaneous oxidation to afford a benzoquinone compound, a key intermediate for generating structure diversity. For instance, addition of a cysteine followed by ring contraction gives arthripenoid A, tautomerization gives the main product arthripenoid C, addition of a molecular of water or amine affords arthripenoid D or E, respectively, and loss of one water forms arthripenoid F. The protein is FAD-dependent monooxygenase atnJ of Arthrinium sp.